Reading from the N-terminus, the 214-residue chain is ATP-dependent Clp protease proteolytic subunit (214 aa).

The active-site Nucleophile is the Ser106. Residue His131 is part of the active site.

The protein belongs to the peptidase S14 family. As to quaternary structure, fourteen ClpP subunits assemble into 2 heptameric rings which stack back to back to give a disk-like structure with a central cavity, resembling the structure of eukaryotic proteasomes.

Its subcellular location is the cytoplasm. The enzyme catalyses Hydrolysis of proteins to small peptides in the presence of ATP and magnesium. alpha-casein is the usual test substrate. In the absence of ATP, only oligopeptides shorter than five residues are hydrolyzed (such as succinyl-Leu-Tyr-|-NHMec, and Leu-Tyr-Leu-|-Tyr-Trp, in which cleavage of the -Tyr-|-Leu- and -Tyr-|-Trp bonds also occurs).. Functionally, cleaves peptides in various proteins in a process that requires ATP hydrolysis. Has a chymotrypsin-like activity. Plays a major role in the degradation of misfolded proteins. In Rhodopseudomonas palustris (strain BisB5), this protein is ATP-dependent Clp protease proteolytic subunit.